The following is a 133-amino-acid chain: ATP synthase epsilon chain (133 aa).

Belongs to the ATPase epsilon chain family. As to quaternary structure, F-type ATPases have 2 components, CF(1) - the catalytic core - and CF(0) - the membrane proton channel. CF(1) has five subunits: alpha(3), beta(3), gamma(1), delta(1), epsilon(1). CF(0) has three main subunits: a, b and c.

Its subcellular location is the cell membrane. Functionally, produces ATP from ADP in the presence of a proton gradient across the membrane. This chain is ATP synthase epsilon chain, found in Geobacillus thermodenitrificans (strain NG80-2).